The chain runs to 111 residues: uncharacterized protein (111 aa).

A coiled-coil region spans residues 4 to 51 (LGQVKVLEEKVAKAVHLVQMLKEENAALRAEIDGRGKRITELEQLVLX).

This is an uncharacterized protein from Treponema pallidum (strain Nichols).